The sequence spans 228 residues: Leucyl/phenylalanyl-tRNA--protein transferase (228 aa).

This sequence belongs to the L/F-transferase family.

It localises to the cytoplasm. It carries out the reaction N-terminal L-lysyl-[protein] + L-leucyl-tRNA(Leu) = N-terminal L-leucyl-L-lysyl-[protein] + tRNA(Leu) + H(+). It catalyses the reaction N-terminal L-arginyl-[protein] + L-leucyl-tRNA(Leu) = N-terminal L-leucyl-L-arginyl-[protein] + tRNA(Leu) + H(+). The catalysed reaction is L-phenylalanyl-tRNA(Phe) + an N-terminal L-alpha-aminoacyl-[protein] = an N-terminal L-phenylalanyl-L-alpha-aminoacyl-[protein] + tRNA(Phe). Functions in the N-end rule pathway of protein degradation where it conjugates Leu, Phe and, less efficiently, Met from aminoacyl-tRNAs to the N-termini of proteins containing an N-terminal arginine or lysine. The protein is Leucyl/phenylalanyl-tRNA--protein transferase of Lawsonia intracellularis (strain PHE/MN1-00).